The primary structure comprises 394 residues: Quinolinate synthase (394 aa).

Residues His57 and Ser74 each contribute to the iminosuccinate site. Cys121 serves as a coordination point for [4Fe-4S] cluster. Iminosuccinate contacts are provided by residues 153–155 and Ser174; that span reads YMN. Position 250 (Cys250) interacts with [4Fe-4S] cluster. Iminosuccinate is bound by residues 276 to 278 and Thr293; that span reads HPE. [4Fe-4S] cluster is bound at residue Cys340.

It belongs to the quinolinate synthase family. Type 3 subfamily. The cofactor is [4Fe-4S] cluster.

It is found in the cytoplasm. The enzyme catalyses iminosuccinate + dihydroxyacetone phosphate = quinolinate + phosphate + 2 H2O + H(+). It functions in the pathway cofactor biosynthesis; NAD(+) biosynthesis; quinolinate from iminoaspartate: step 1/1. Its function is as follows. Catalyzes the condensation of iminoaspartate with dihydroxyacetone phosphate to form quinolinate. This Nocardioides sp. (strain ATCC BAA-499 / JS614) protein is Quinolinate synthase.